The sequence spans 189 residues: Putative biopolymer transport protein ExbB-like 1 (189 aa).

Helical transmembrane passes span 14 to 34 (FVTT…LWVF), 99 to 119 (LVVL…GTVV), and 147 to 167 (LIAT…YLIL).

This sequence belongs to the ExbB/TolQ family.

It is found in the cell inner membrane. This chain is Putative biopolymer transport protein ExbB-like 1, found in Helicobacter pylori (strain ATCC 700392 / 26695) (Campylobacter pylori).